Reading from the N-terminus, the 531-residue chain is Probable peptide ABC transporter periplasmic-binding protein y4tO (531 aa).

Positions 1–32 (MTISRRDLFKAGLAAGAALSVPSLLRAQTAVA) form a signal peptide, tat-type signal.

The protein belongs to the bacterial solute-binding protein 5 family. In terms of processing, predicted to be exported by the Tat system. The position of the signal peptide cleavage has not been experimentally proven.

It is found in the periplasm. Functionally, probably part of the binding-protein-dependent transport system y4tOPQRS for a peptide. The chain is Probable peptide ABC transporter periplasmic-binding protein y4tO from Sinorhizobium fredii (strain NBRC 101917 / NGR234).